The chain runs to 336 residues: Coproporphyrin III ferrochelatase (336 aa).

Ser-52 and Tyr-116 together coordinate Fe-coproporphyrin III. His-172 and Glu-255 together coordinate Fe(2+).

It belongs to the ferrochelatase family.

It is found in the cytoplasm. It carries out the reaction Fe-coproporphyrin III + 2 H(+) = coproporphyrin III + Fe(2+). It participates in porphyrin-containing compound metabolism; protoheme biosynthesis. Involved in coproporphyrin-dependent heme b biosynthesis. Catalyzes the insertion of ferrous iron into coproporphyrin III to form Fe-coproporphyrin III. The polypeptide is Coproporphyrin III ferrochelatase (Mycolicibacterium paratuberculosis (strain ATCC BAA-968 / K-10) (Mycobacterium paratuberculosis)).